A 249-amino-acid chain; its full sequence is DNA polymerase sliding clamp 1 (249 aa).

This sequence belongs to the PCNA family. Homotrimer. The subunits circularize to form a toroid; DNA passes through its center. Replication factor C (RFC) is required to load the toroid on the DNA. Interacts with TIP.

Inhibited by interaction with the PCNA inhibitor TIP. In terms of biological role, sliding clamp subunit that acts as a moving platform for DNA processing. Responsible for tethering the catalytic subunit of DNA polymerase and other proteins to DNA during high-speed replication. This chain is DNA polymerase sliding clamp 1, found in Thermococcus kodakarensis (strain ATCC BAA-918 / JCM 12380 / KOD1) (Pyrococcus kodakaraensis (strain KOD1)).